Consider the following 141-residue polypeptide: Small ribosomal subunit protein bS6 (141 aa).

The tract at residues 96–141 is disordered; it reads VTGPSEMLKAEENRSERRERRERPEHADGAEGDDSNDSDNSDNADE. Basic and acidic residues predominate over residues 103–124; the sequence is LKAEENRSERRERRERPEHADG. Over residues 125-141 the composition is skewed to acidic residues; sequence AEGDDSNDSDNSDNADE.

Belongs to the bacterial ribosomal protein bS6 family.

Its function is as follows. Binds together with bS18 to 16S ribosomal RNA. The protein is Small ribosomal subunit protein bS6 of Pseudomonas entomophila (strain L48).